The chain runs to 864 residues: A-kinase anchor protein 3 (864 aa).

Phosphoserine; by STK33 is present on S12. The tract at residues 125–138 (VSFYANRLTNLVIA) is PKA-RII subunit binding domain. 2 disordered regions span residues 190-235 (NISS…DKPG) and 251-281 (AGDA…DFSN). Over residues 204–218 (SGSSQAPGLRYTSTL) the composition is skewed to polar residues. Phosphoserine is present on S206. A compositionally biased stretch (basic and acidic residues) spans 219-235 (KIKESTKEGKCPDDKPG). Position 405 is a phosphoserine (S405). Y406 is subject to Phosphotyrosine. The tract at residues 619–638 (VHEQNTQEEEIHPCERPKTP) is disordered. Positions 627–638 (EEIHPCERPKTP) are enriched in basic and acidic residues.

Belongs to the AKAP110 family. As to quaternary structure, interacts with ROPN1 and ROPN1L. Interacts with QRICH2. Post-translationally, phosphorylated by STK33 during sperm flagella assembly. Phosphorylated on tyrosine.

Its subcellular location is the cytoplasmic vesicle. It localises to the secretory vesicle. The protein resides in the acrosome. The protein localises to the cell projection. It is found in the cilium. Its subcellular location is the flagellum. In terms of biological role, structural component of sperm fibrous sheath. Required for the formation of the subcellular structure of the sperm flagellum, sperm motility and male fertility. The polypeptide is A-kinase anchor protein 3 (Mus musculus (Mouse)).